Reading from the N-terminus, the 638-residue chain is Zinc finger and BTB domain-containing protein 22 (638 aa).

The region spanning cysteine 57–alanine 121 is the BTB domain. Disordered stretches follow at residues cysteine 171–glutamine 223, serine 229–valine 248, aspartate 335–glutamate 354, and glutamate 367–valine 451. The span at serine 189–phenylalanine 210 shows a compositional bias: polar residues. A Phosphoserine modification is found at serine 203. The C2H2-type 1; atypical zinc finger occupies phenylalanine 483–histidine 504. C2H2-type zinc fingers lie at residues phenylalanine 510–histidine 532 and tyrosine 538–histidine 559. The tract at residues histidine 564 to histidine 638 is disordered.

The protein belongs to the krueppel C2H2-type zinc-finger protein family.

It localises to the nucleus. In terms of biological role, may be involved in transcriptional regulation. The sequence is that of Zinc finger and BTB domain-containing protein 22 (Zbtb22) from Mus musculus (Mouse).